Here is a 36-residue protein sequence, read N- to C-terminus: Gloverin (36 aa).

The protein resides in the secreted. In terms of biological role, antibacterial protein. In Heliothis virescens (Tobacco budworm moth), this protein is Gloverin.